The following is a 41-amino-acid chain: Large ribosomal subunit protein bL36 (41 aa).

It belongs to the bacterial ribosomal protein bL36 family.

The sequence is that of Large ribosomal subunit protein bL36 from Ruegeria sp. (strain TM1040) (Silicibacter sp.).